We begin with the raw amino-acid sequence, 111 residues long: Nucleoid-associated protein NMA1657 (111 aa).

This sequence belongs to the YbaB/EbfC family. In terms of assembly, homodimer.

It is found in the cytoplasm. It localises to the nucleoid. Its function is as follows. Binds to DNA and alters its conformation. May be involved in regulation of gene expression, nucleoid organization and DNA protection. In Neisseria meningitidis serogroup A / serotype 4A (strain DSM 15465 / Z2491), this protein is Nucleoid-associated protein NMA1657.